A 349-amino-acid polypeptide reads, in one-letter code: Dihydroorotate dehydrogenase (quinone) (349 aa).

FMN-binding positions include 67–71 (AGLDK) and Thr-91. Position 71 (Lys-71) interacts with substrate. Residue 116–120 (NRLGF) coordinates substrate. Asn-147 and Asn-180 together coordinate FMN. Residue Asn-180 participates in substrate binding. Ser-183 (nucleophile) is an active-site residue. Asn-185 provides a ligand contact to substrate. Positions 225 and 253 each coordinate FMN. Residue 254–255 (NT) participates in substrate binding. Residues Gly-276, Gly-305, and 326-327 (YT) each bind FMN.

This sequence belongs to the dihydroorotate dehydrogenase family. Type 2 subfamily. In terms of assembly, monomer. FMN serves as cofactor.

The protein localises to the cell membrane. It carries out the reaction (S)-dihydroorotate + a quinone = orotate + a quinol. The protein operates within pyrimidine metabolism; UMP biosynthesis via de novo pathway; orotate from (S)-dihydroorotate (quinone route): step 1/1. Its function is as follows. Catalyzes the conversion of dihydroorotate to orotate with quinone as electron acceptor. The chain is Dihydroorotate dehydrogenase (quinone) from Bordetella avium (strain 197N).